The sequence spans 481 residues: Glutamyl-tRNA(Gln) amidotransferase subunit A (481 aa).

Active-site charge relay system residues include lysine 74 and serine 149. Serine 173 (acyl-ester intermediate) is an active-site residue.

Belongs to the amidase family. GatA subfamily. As to quaternary structure, heterotrimer of A, B and C subunits.

It catalyses the reaction L-glutamyl-tRNA(Gln) + L-glutamine + ATP + H2O = L-glutaminyl-tRNA(Gln) + L-glutamate + ADP + phosphate + H(+). Functionally, allows the formation of correctly charged Gln-tRNA(Gln) through the transamidation of misacylated Glu-tRNA(Gln) in organisms which lack glutaminyl-tRNA synthetase. The reaction takes place in the presence of glutamine and ATP through an activated gamma-phospho-Glu-tRNA(Gln). The chain is Glutamyl-tRNA(Gln) amidotransferase subunit A from Francisella tularensis subsp. novicida (strain U112).